A 303-amino-acid chain; its full sequence is MNPQELKSILSHGLLSFPVTDFNAQGDFNQAGYIKRLEWLAPYGASALFAAGGTGEFFSLAASEYSQVIKTAVDTCAKSVPILAGVGGSTRQAIEYAQEAERLGAKGLLLLPHYLTEASQDGVAAHVEAVCKSVNIGVVVYNRNVCRLNADLLEKLAERCPNLIGYKDGLGDIELMVSIRRRLGDRFSYLGGLPTAEVYAAAYKALGVPVYSSAVFNFIPKTAMDFYHAIARDDHATVGKLIDDFFLPYLDIRNRKAGYAVSIVKAGAKIAGYDAGPVRTPLTDLTAEEYEMLAALMDKMGPQ.

Belongs to the DapA family.

It catalyses the reaction 5-dehydro-4-deoxy-D-glucarate + H(+) = 2,5-dioxopentanoate + CO2 + H2O. Its pathway is carbohydrate acid metabolism; D-glucarate degradation; 2,5-dioxopentanoate from D-glucarate: step 2/2. In Pseudomonas putida (strain W619), this protein is Probable 5-dehydro-4-deoxyglucarate dehydratase.